Reading from the N-terminus, the 395-residue chain is L-methionine gamma-lyase (395 aa).

Pyridoxal 5'-phosphate-binding positions include 56–58 (YTR) and 86–87 (GM). Tyr111 contacts substrate. 206–208 (SVT) contacts pyridoxal 5'-phosphate. Lys209 carries the N6-(pyridoxal phosphate)lysine modification. Arg373 provides a ligand contact to substrate.

This sequence belongs to the trans-sulfuration enzymes family. L-methionine gamma-lyase subfamily. Homotetramer. The cofactor is pyridoxal 5'-phosphate.

It catalyses the reaction L-methionine + H2O = methanethiol + 2-oxobutanoate + NH4(+). It carries out the reaction L-homocysteine + H2O = 2-oxobutanoate + hydrogen sulfide + NH4(+) + H(+). Functionally, catalyzes the alpha,gamma-elimination of L-methionine to produce methanethiol, 2-oxobutanoate and ammonia; methanethiol (methyl mercaptan) is considered to be one of the main causes of the oral malodor associated with periodontitis. Also displays homocysteine desulfhydrase activity, degrading homocysteine to produce hydrogen sulfide, 2-oxobutanoate and ammonia. L-cysteine and S-methyl-L-cysteine are poor substrates for the enzyme. Its function is as follows. Plays an important role in the resistance of F.nucleatum to the antibacterial agent 3-chloro-DL-alanine (3CA), thanks to its 3CA chloride-lyase (deaminating) activity. The polypeptide is L-methionine gamma-lyase (Fusobacterium nucleatum subsp. polymorphum (Fusobacterium polymorphum)).